The chain runs to 261 residues: tRNA pseudouridine synthase A (261 aa).

Asp51 acts as the Nucleophile in catalysis. A substrate-binding site is contributed by Tyr109.

Belongs to the tRNA pseudouridine synthase TruA family. In terms of assembly, homodimer.

The catalysed reaction is uridine(38/39/40) in tRNA = pseudouridine(38/39/40) in tRNA. Functionally, formation of pseudouridine at positions 38, 39 and 40 in the anticodon stem and loop of transfer RNAs. The polypeptide is tRNA pseudouridine synthase A (Shewanella baltica (strain OS155 / ATCC BAA-1091)).